Here is a 321-residue protein sequence, read N- to C-terminus: Probable pectate lyase A (321 aa).

Positions 1–18 are cleaved as a signal peptide; it reads MKFVATLIACGLSGLALA. An N-linked (GlcNAc...) asparagine glycan is attached at Asn93. Asp134, Asp163, and Asp167 together coordinate Ca(2+). Residue Arg220 is part of the active site. Residue Asn238 is glycosylated (N-linked (GlcNAc...) asparagine).

The protein belongs to the polysaccharide lyase 1 family. The cofactor is Ca(2+).

It localises to the secreted. It catalyses the reaction Eliminative cleavage of (1-&gt;4)-alpha-D-galacturonan to give oligosaccharides with 4-deoxy-alpha-D-galact-4-enuronosyl groups at their non-reducing ends.. Its function is as follows. Pectinolytic enzyme consist of four classes of enzymes: pectin lyase, polygalacturonase, pectin methylesterase and rhamnogalacturonase. Among pectinolytic enzymes, pectin lyase is the most important in depolymerization of pectin, since it cleaves internal glycosidic bonds of highly methylated pectins. Favors pectate, the anion, over pectin, the methyl ester. The protein is Probable pectate lyase A (plyA) of Aspergillus fumigatus (strain CBS 144.89 / FGSC A1163 / CEA10) (Neosartorya fumigata).